The following is a 228-amino-acid chain: UPF0758 protein str1465 (228 aa).

Residues 103 to 225 (QIMSSQQVAR…YYSFREERED (123 aa)) enclose the MPN domain. Positions 174, 176, and 187 each coordinate Zn(2+). Positions 174–187 (HNHPSGEAYPSRND) match the JAMM motif motif.

Belongs to the UPF0758 family.

In Streptococcus thermophilus (strain CNRZ 1066), this protein is UPF0758 protein str1465.